We begin with the raw amino-acid sequence, 311 residues long: Glutaminase (311 aa).

7 residues coordinate substrate: serine 66, asparagine 116, glutamate 162, asparagine 169, tyrosine 193, tyrosine 245, and valine 263.

The protein belongs to the glutaminase family. As to quaternary structure, homotetramer.

It catalyses the reaction L-glutamine + H2O = L-glutamate + NH4(+). The polypeptide is Glutaminase (Rhodopseudomonas palustris (strain TIE-1)).